The primary structure comprises 253 residues: MRILVTNDDGIHAPGLKVLEEIARGLSDDVWVVAPETDQSGVSHSLSLNDPLRLRKVAETRFAVKGTPSDCVIMGVRHILKERGPDLVLSGVNRGQNVAEDVTYSGTVAGAMEGTILGVRSIALSQAYGAGGRAHVKWQTASHHGARTIRRILEAGIEPGILVNVNFPDCEPEAVEGIAVVAQGMRNQQLLAIDERVDGRGNPYFWLAFAKARFEPGHGTDLKAIAENRIAVTPLRLDLTDEPTLTRFAQALG.

Positions 8, 9, 40, and 93 each coordinate a divalent metal cation.

Belongs to the SurE nucleotidase family. It depends on a divalent metal cation as a cofactor.

Its subcellular location is the cytoplasm. The enzyme catalyses a ribonucleoside 5'-phosphate + H2O = a ribonucleoside + phosphate. Functionally, nucleotidase that shows phosphatase activity on nucleoside 5'-monophosphates. The protein is 5'-nucleotidase SurE of Methylobacterium sp. (strain 4-46).